The following is a 559-amino-acid chain: Suppressor of tumorigenicity 7 protein-like (559 aa).

A run of 3 helical transmembrane segments spans residues 39-59 (GLAN…LYAL), 83-103 (FYVA…IFEW), and 513-533 (LPFF…LAFL).

It belongs to the ST7 family. Ubiquitously expressed.

It is found in the membrane. The polypeptide is Suppressor of tumorigenicity 7 protein-like (St7l) (Mus musculus (Mouse)).